A 914-amino-acid chain; its full sequence is Isoleucine--tRNA ligase (914 aa).

Residues 64–74 (PYANGNFHLGH) carry the 'HIGH' region motif. L-isoleucyl-5'-AMP is bound at residue E557. The 'KMSKS' region signature appears at 598 to 602 (PMSKS). K601 lines the ATP pocket. Residues C889, C892, C906, and C909 each contribute to the Zn(2+) site.

The protein belongs to the class-I aminoacyl-tRNA synthetase family. IleS type 1 subfamily. As to quaternary structure, monomer. Requires Zn(2+) as cofactor.

The protein localises to the cytoplasm. The catalysed reaction is tRNA(Ile) + L-isoleucine + ATP = L-isoleucyl-tRNA(Ile) + AMP + diphosphate. Its function is as follows. Catalyzes the attachment of isoleucine to tRNA(Ile). As IleRS can inadvertently accommodate and process structurally similar amino acids such as valine, to avoid such errors it has two additional distinct tRNA(Ile)-dependent editing activities. One activity is designated as 'pretransfer' editing and involves the hydrolysis of activated Val-AMP. The other activity is designated 'posttransfer' editing and involves deacylation of mischarged Val-tRNA(Ile). The protein is Isoleucine--tRNA ligase of Leptospira interrogans serogroup Icterohaemorrhagiae serovar Lai (strain 56601).